Here is a 151-residue protein sequence, read N- to C-terminus: Small ribosomal subunit protein bS6 (151 aa).

The tract at residues 97–151 (EAEPSAMMQKRDRDDRKDRDRGDRPRRRDDDFGGGDRGDRGDRGDRPERNFGGEN) is disordered. A compositionally biased stretch (basic and acidic residues) spans 105 to 151 (QKRDRDDRKDRDRGDRPRRRDDDFGGGDRGDRGDRGDRPERNFGGEN).

The protein belongs to the bacterial ribosomal protein bS6 family.

Its function is as follows. Binds together with bS18 to 16S ribosomal RNA. In Methylorubrum extorquens (strain CM4 / NCIMB 13688) (Methylobacterium extorquens), this protein is Small ribosomal subunit protein bS6.